We begin with the raw amino-acid sequence, 510 residues long: Polyamine aminopropyltransferase 2 (510 aa).

Helical transmembrane passes span 6–26, 38–58, 74–94, 102–122, 140–160, and 165–185; these read ALLVLAVFVVASCGLAYELIA, ILQFSSIIGAYLFAMGIGSWV, LELLVGLFGGVSAAALFLLFA, LVLYALVTVIGVLVGMEIPLV, VLTFDYLGALAVSLLFPLVLA, and LVRTGFLFGLCNTAIAVWTLW. A PABS domain is found at 205-449; that stretch reads AGMVGAALLA…GEWGFILAAP (245 aa). Positions 207-456 are spermidine synthase; sequence MVGAALLAGF…AAPGRADFRP (250 aa). S-methyl-5'-thioadenosine is bound at residue glutamine 244. Positions 274 and 298 each coordinate spermidine. Residues aspartate 318 and 352-353 each bind S-methyl-5'-thioadenosine; that span reads DA. The active-site Proton acceptor is the aspartate 370.

This sequence belongs to the spermidine/spermine synthase family. Homodimer or homotetramer.

The protein resides in the cell membrane. It catalyses the reaction S-adenosyl 3-(methylsulfanyl)propylamine + putrescine = S-methyl-5'-thioadenosine + spermidine + H(+). Its pathway is amine and polyamine biosynthesis; spermidine biosynthesis; spermidine from putrescine: step 1/1. Catalyzes the irreversible transfer of a propylamine group from the amino donor S-adenosylmethioninamine (decarboxy-AdoMet) to putrescine (1,4-diaminobutane) to yield spermidine. The polypeptide is Polyamine aminopropyltransferase 2 (Ralstonia nicotianae (strain ATCC BAA-1114 / GMI1000) (Ralstonia solanacearum)).